We begin with the raw amino-acid sequence, 217 residues long: Pyrophosphatase PpaX (217 aa).

Aspartate 11 serves as the catalytic Nucleophile.

This sequence belongs to the HAD-like hydrolase superfamily. PpaX family. Mg(2+) serves as cofactor.

It catalyses the reaction diphosphate + H2O = 2 phosphate + H(+). Hydrolyzes pyrophosphate formed during P-Ser-HPr dephosphorylation by HPrK/P. Might play a role in controlling the intracellular pyrophosphate pool. The polypeptide is Pyrophosphatase PpaX (Listeria welshimeri serovar 6b (strain ATCC 35897 / DSM 20650 / CCUG 15529 / CIP 8149 / NCTC 11857 / SLCC 5334 / V8)).